We begin with the raw amino-acid sequence, 143 residues long: Small ribosomal subunit protein uS9 (143 aa).

Serine 2 is subject to N-acetylserine. The disordered stretch occupies residues 123–143; it reads MPEPKKFGGKGARSRYQKSYR. A compositionally biased stretch (basic residues) spans 134-143; it reads ARSRYQKSYR.

This sequence belongs to the universal ribosomal protein uS9 family.

This Maudiozyma exigua (Yeast) protein is Small ribosomal subunit protein uS9 (RPS16).